The following is a 329-amino-acid chain: MKPLRFAVTPGEPAGIGPDLCLLLAADAQPHPLIAITSRDLLAERATQLGLAVSLLPVAPGQWPDLPAPAGSLYVWDTPLAAPVVPGQLDKANAAFVLETLTRAGQGCLDGHFAGMITAPVHKGVINESGIAFSGHTEFLAELTRTAQVVMMLATRGLRVALVTTHLPLRDVADAITAERVERVTRILHADMRDKFGIANPRILVCGLNPHAGEGGHLGREEIDIIEPTLARLRTEGMDLRGPLPADTLFTPKYLEHCDAVLAMYHDQGLPVLKYKGFGAAVNVTLGLPIIRTSVDHGTALDLAGTGKVDTGSLRVALETAYQMAENRP.

Substrate is bound by residues histidine 136 and threonine 137. A divalent metal cation contacts are provided by histidine 166, histidine 211, and histidine 266. 3 residues coordinate substrate: lysine 274, asparagine 283, and arginine 292.

This sequence belongs to the PdxA family. As to quaternary structure, homodimer. Requires Zn(2+) as cofactor. Mg(2+) is required as a cofactor. The cofactor is Co(2+).

It is found in the cytoplasm. It carries out the reaction 4-(phosphooxy)-L-threonine + NAD(+) = 3-amino-2-oxopropyl phosphate + CO2 + NADH. Its pathway is cofactor biosynthesis; pyridoxine 5'-phosphate biosynthesis; pyridoxine 5'-phosphate from D-erythrose 4-phosphate: step 4/5. Functionally, catalyzes the NAD(P)-dependent oxidation of 4-(phosphooxy)-L-threonine (HTP) into 2-amino-3-oxo-4-(phosphooxy)butyric acid which spontaneously decarboxylates to form 3-amino-2-oxopropyl phosphate (AHAP). In Pseudomonas putida (strain ATCC 47054 / DSM 6125 / CFBP 8728 / NCIMB 11950 / KT2440), this protein is 4-hydroxythreonine-4-phosphate dehydrogenase.